We begin with the raw amino-acid sequence, 191 residues long: Akirin-1 (191 aa).

The interval 17–70 is disordered; it reads LLSPGSPKRRRCAPLPGPTPGLRPPDAEPPPLQMQTPPASLQQPAPPGSERRLP. A Phosphoserine modification is found at Ser-22. The short motif at 23–28 is the Nuclear localization signal element; it reads PKRRRC. Residues 31 to 48 show a composition bias toward pro residues; sequence LPGPTPGLRPPDAEPPPL. Residues 49–59 show a composition bias toward polar residues; it reads QMQTPPASLQQ. The residue at position 71 (Thr-71) is a Phosphothreonine. The SYVS motif signature appears at 188–191; it reads SYVS.

This sequence belongs to the akirin family. As to expression, expressed in macrophages and satellite cells.

It is found in the nucleus. Functionally, molecular adapter that acts as a bridge between proteins, and which is involved skeletal muscle development. Functions as a signal transducer for MSTN during skeletal muscle regeneration and myogenesis. May regulate chemotaxis of both macrophages and myoblasts by reorganising actin cytoskeleton, leading to more efficient lamellipodia formation via a PI3 kinase dependent pathway. In contrast to AKIRIN2, not involved in nuclear import of proteasomes. The polypeptide is Akirin-1 (Mus musculus (Mouse)).